A 194-amino-acid chain; its full sequence is Protein GrpE (194 aa).

Over residues 1 to 24 (MEEKDKEEKVTGENLEPEDKNLEQ) the composition is skewed to basic and acidic residues. Positions 1–41 (MEEKDKEEKVTGENLEPEDKNLEQEDKEEVVGPQEEQQIDE) are disordered.

The protein belongs to the GrpE family. In terms of assembly, homodimer.

The protein localises to the cytoplasm. Participates actively in the response to hyperosmotic and heat shock by preventing the aggregation of stress-denatured proteins, in association with DnaK and GrpE. It is the nucleotide exchange factor for DnaK and may function as a thermosensor. Unfolded proteins bind initially to DnaJ; upon interaction with the DnaJ-bound protein, DnaK hydrolyzes its bound ATP, resulting in the formation of a stable complex. GrpE releases ADP from DnaK; ATP binding to DnaK triggers the release of the substrate protein, thus completing the reaction cycle. Several rounds of ATP-dependent interactions between DnaJ, DnaK and GrpE are required for fully efficient folding. This is Protein GrpE from Carboxydothermus hydrogenoformans (strain ATCC BAA-161 / DSM 6008 / Z-2901).